Consider the following 402-residue polypeptide: Acetylornithine aminotransferase (402 aa).

Pyridoxal 5'-phosphate is bound by residues 117–118 (GA) and Phe143. Arg146 provides a ligand contact to N(2)-acetyl-L-ornithine. 231–234 (DEVQ) is a pyridoxal 5'-phosphate binding site. N6-(pyridoxal phosphate)lysine is present on Lys260. Residue Thr288 participates in N(2)-acetyl-L-ornithine binding. Thr289 provides a ligand contact to pyridoxal 5'-phosphate.

It belongs to the class-III pyridoxal-phosphate-dependent aminotransferase family. ArgD subfamily. In terms of assembly, homodimer. It depends on pyridoxal 5'-phosphate as a cofactor.

The protein localises to the cytoplasm. It carries out the reaction N(2)-acetyl-L-ornithine + 2-oxoglutarate = N-acetyl-L-glutamate 5-semialdehyde + L-glutamate. The protein operates within amino-acid biosynthesis; L-arginine biosynthesis; N(2)-acetyl-L-ornithine from L-glutamate: step 4/4. This is Acetylornithine aminotransferase from Corynebacterium efficiens (strain DSM 44549 / YS-314 / AJ 12310 / JCM 11189 / NBRC 100395).